We begin with the raw amino-acid sequence, 508 residues long: H/ACA ribonucleoprotein complex subunit 4 (508 aa).

The disordered stretch occupies residues 1–29 (MADVEVRKEKKKKKIKEEPLDGDDIGTLQ). D123 functions as the Nucleophile in the catalytic mechanism. Residues 294 to 369 (HKRIIMKDSS…VVAKIKRVIM (76 aa)) form the PUA domain. Positions 423–508 (AAQEVSPTNG…KDRDRDEAQE (86 aa)) are disordered. Position 442 is a phosphoserine (S442). Residues 442–457 (STSSVEETAAAAVSEE) show a composition bias toward low complexity. T443 carries the phosphothreonine modification. Phosphoserine occurs at positions 444 and 445. Position 449 is a phosphothreonine (T449). The residue at position 455 (S455) is a Phosphoserine. The residue at position 458 (T458) is a Phosphothreonine. The segment covering 475–485 (EAPEAAEEEAE) has biased composition (acidic residues). The segment covering 499 to 508 (KDRDRDEAQE) has biased composition (basic and acidic residues).

It belongs to the pseudouridine synthase TruB family. In terms of assembly, component of the box H/ACA small nucleolar ribonucleoprotein (H/ACA snoRNP) complex consisting of Nop60B, Gar1, NPH2 and Nop10, and associated with H/ACA-type snoRNAs. In terms of tissue distribution, expressed at higher levels in females than in males. Expressed almost exclusively in females with high levels of expression in the ovary.

It is found in the nucleus. The protein resides in the nucleolus. It catalyses the reaction a uridine in RNA = a pseudouridine in RNA. Functionally, catalytic subunit of the box H/ACA small nucleolar ribonucleoprotein (H/ACA snoRNP) complex, which catalyzes pseudouridylation of rRNA. This involves the isomerization of uridine such that the ribose is subsequently attached to C5, instead of the normal N1. Pseudouridine ('psi') residues may serve to stabilize the conformation of rRNAs. Required for ribosome biogenesis; plays a central role in ribosomal RNA processing. H/ACA snoRNP complex-dependent ribosome biogenesis is important in female germline cell differentiation during oogenesis. Essential for viability and female fertility. Required for maintenance of the germline stem cell lineage during spermatogenesis. The protein is H/ACA ribonucleoprotein complex subunit 4 of Drosophila melanogaster (Fruit fly).